The following is a 359-amino-acid chain: Fructose-bisphosphate aldolase class 2 (359 aa).

Lys9 carries the post-translational modification N6-acetyllysine. Ser62 contacts D-glyceraldehyde 3-phosphate. The active-site Proton donor is the Asp110. Zn(2+) contacts are provided by His111, Asp145, Glu175, and His227. Gly228 serves as a coordination point for dihydroxyacetone phosphate. A Zn(2+)-binding site is contributed by His265. Dihydroxyacetone phosphate-binding positions include 266–268 and 287–290; these read GGS and NIDT.

The protein belongs to the class II fructose-bisphosphate aldolase family. As to quaternary structure, homodimer. Requires Zn(2+) as cofactor.

The catalysed reaction is beta-D-fructose 1,6-bisphosphate = D-glyceraldehyde 3-phosphate + dihydroxyacetone phosphate. It functions in the pathway carbohydrate degradation; glycolysis; D-glyceraldehyde 3-phosphate and glycerone phosphate from D-glucose: step 4/4. Catalyzes the aldol condensation of dihydroxyacetone phosphate (DHAP or glycerone-phosphate) with glyceraldehyde 3-phosphate (G3P) to form fructose 1,6-bisphosphate (FBP) in gluconeogenesis and the reverse reaction in glycolysis. The sequence is that of Fructose-bisphosphate aldolase class 2 (fbaA) from Escherichia coli O157:H7.